The following is a 1358-amino-acid chain: DNA-directed RNA polymerase subunit beta (1358 aa).

This sequence belongs to the RNA polymerase beta chain family. As to quaternary structure, the RNAP catalytic core consists of 2 alpha, 1 beta, 1 beta' and 1 omega subunit. When a sigma factor is associated with the core the holoenzyme is formed, which can initiate transcription.

The enzyme catalyses RNA(n) + a ribonucleoside 5'-triphosphate = RNA(n+1) + diphosphate. Its function is as follows. DNA-dependent RNA polymerase catalyzes the transcription of DNA into RNA using the four ribonucleoside triphosphates as substrates. The polypeptide is DNA-directed RNA polymerase subunit beta (Francisella tularensis subsp. holarctica (strain LVS)).